Reading from the N-terminus, the 310-residue chain is Ribosomal RNA small subunit methyltransferase H (310 aa).

Residues 32 to 34 (GGH), Asp52, Phe79, Asp100, and Gln107 contribute to the S-adenosyl-L-methionine site.

Belongs to the methyltransferase superfamily. RsmH family.

It localises to the cytoplasm. The enzyme catalyses cytidine(1402) in 16S rRNA + S-adenosyl-L-methionine = N(4)-methylcytidine(1402) in 16S rRNA + S-adenosyl-L-homocysteine + H(+). Functionally, specifically methylates the N4 position of cytidine in position 1402 (C1402) of 16S rRNA. This chain is Ribosomal RNA small subunit methyltransferase H, found in Bacillus thuringiensis subsp. konkukian (strain 97-27).